Reading from the N-terminus, the 343-residue chain is Endoglucanase C (343 aa).

Catalysis depends on glutamate 140, which acts as the Proton donor. Glutamate 280 functions as the Nucleophile in the catalytic mechanism.

It belongs to the glycosyl hydrolase 5 (cellulase A) family.

It carries out the reaction Endohydrolysis of (1-&gt;4)-beta-D-glucosidic linkages in cellulose, lichenin and cereal beta-D-glucans.. It functions in the pathway glycan metabolism; cellulose degradation. Functionally, this enzyme catalyzes the endohydrolysis of 1,4-beta-glucosidic linkages in cellulose, lichenin and cereal beta-D-glucans. The chain is Endoglucanase C (celC) from Acetivibrio thermocellus (strain ATCC 27405 / DSM 1237 / JCM 9322 / NBRC 103400 / NCIMB 10682 / NRRL B-4536 / VPI 7372) (Clostridium thermocellum).